The sequence spans 327 residues: Golgi to ER traffic protein 4 homolog (327 aa).

The residue at position 2 (Ala2) is an N-acetylalanine. Ser12 bears the Phosphoserine mark. The tract at residues 195–271 (FVAQAVLQFL…YQPSLRRDPM (77 aa)) is interacts with BAG6. Residues 307-327 (GSSEQEDGEESPSDGSPIELD) are disordered.

It belongs to the GET4 family. Component of the BAG6/BAT3 complex, at least composed of BAG6, UBL4A and GET4/TRC35. Interacts with BAG6; the interaction is direct and localizes BAG6 to the cytosol. Interacts with GET3. In terms of processing, ubiquitinated by RNF12, leading to proteasomal degradation. When unassembled from BAG6; ubiquitinylation is modulated by BAG6 quality control role and effectuated by RNF126.

Its subcellular location is the cytoplasm. It localises to the cytosol. Its function is as follows. As part of a cytosolic protein quality control complex, the BAG6/BAT3 complex, maintains misfolded and hydrophobic patches-containing proteins in a soluble state and participates in their proper delivery to the endoplasmic reticulum or alternatively can promote their sorting to the proteasome where they undergo degradation. The BAG6/BAT3 complex is involved in the post-translational delivery of tail-anchored/type II transmembrane proteins to the endoplasmic reticulum membrane. Recruited to ribosomes, it interacts with the transmembrane region of newly synthesized tail-anchored proteins and together with SGTA and ASNA1 mediates their delivery to the endoplasmic reticulum. Client proteins that cannot be properly delivered to the endoplasmic reticulum are ubiquitinated and sorted to the proteasome. Similarly, the BAG6/BAT3 complex also functions as a sorting platform for proteins of the secretory pathway that are mislocalized to the cytosol either delivering them to the proteasome for degradation or to the endoplasmic reticulum. The BAG6/BAT3 complex also plays a role in the endoplasmic reticulum-associated degradation (ERAD), a quality control mechanism that eliminates unwanted proteins of the endoplasmic reticulum through their retrotranslocation to the cytosol and their targeting to the proteasome. It maintains these retrotranslocated proteins in an unfolded yet soluble state condition in the cytosol to ensure their proper delivery to the proteasome. This Homo sapiens (Human) protein is Golgi to ER traffic protein 4 homolog.